A 356-amino-acid polypeptide reads, in one-letter code: UDP-N-acetylenolpyruvoylglucosamine reductase (356 aa).

The region spanning 19 to 227 (LGGPAARFCS…RDAVLSLRRS (209 aa)) is the FAD-binding PCMH-type domain. Arginine 167 is an active-site residue. Residue serine 244 is the Proton donor of the active site. Glutamate 348 is a catalytic residue.

Belongs to the MurB family. The cofactor is FAD.

It localises to the cytoplasm. It carries out the reaction UDP-N-acetyl-alpha-D-muramate + NADP(+) = UDP-N-acetyl-3-O-(1-carboxyvinyl)-alpha-D-glucosamine + NADPH + H(+). It participates in cell wall biogenesis; peptidoglycan biosynthesis. Functionally, cell wall formation. The sequence is that of UDP-N-acetylenolpyruvoylglucosamine reductase from Thermobifida fusca (strain YX).